A 262-amino-acid chain; its full sequence is Octopine permease ATP-binding protein P (262 aa).

The 246-residue stretch at Val9–Leu254 folds into the ABC transporter domain. Residue Gly41–Ser48 coordinates ATP.

This sequence belongs to the ABC transporter superfamily.

Its subcellular location is the cell inner membrane. In terms of biological role, component of the octopine active transport system probably consisting of four subunits: Q, M, P and T. This chain is Octopine permease ATP-binding protein P (occP), found in Rhizobium meliloti (Ensifer meliloti).